A 107-amino-acid polypeptide reads, in one-letter code: Rhodocoxin (107 aa).

The 2Fe-2S ferredoxin-type domain occupies 2–106 (PTVTYVHPDG…GLIVRLPEEQ (105 aa)). Positions 40, 46, 49, and 87 each coordinate [2Fe-2S] cluster.

Belongs to the adrenodoxin/putidaredoxin family. Requires [2Fe-2S] cluster as cofactor.

In terms of biological role, ferredoxin-type protein which transfers electrons from rhodocoxin reductase to cytochrome CYP116 (ThcB), which is involved in the degradation of thiocarbamate herbicides. This chain is Rhodocoxin (thcC), found in Rhodococcus erythropolis (Arthrobacter picolinophilus).